Consider the following 290-residue polypeptide: 4-diphosphocytidyl-2-C-methyl-D-erythritol kinase (290 aa).

Residue Lys-13 is part of the active site. 96–106 (PMGGGIGGGSS) provides a ligand contact to ATP. The active site involves Asp-138.

This sequence belongs to the GHMP kinase family. IspE subfamily.

The enzyme catalyses 4-CDP-2-C-methyl-D-erythritol + ATP = 4-CDP-2-C-methyl-D-erythritol 2-phosphate + ADP + H(+). It participates in isoprenoid biosynthesis; isopentenyl diphosphate biosynthesis via DXP pathway; isopentenyl diphosphate from 1-deoxy-D-xylulose 5-phosphate: step 3/6. Its function is as follows. Catalyzes the phosphorylation of the position 2 hydroxy group of 4-diphosphocytidyl-2C-methyl-D-erythritol. In Vibrio cholerae serotype O1 (strain ATCC 39541 / Classical Ogawa 395 / O395), this protein is 4-diphosphocytidyl-2-C-methyl-D-erythritol kinase.